The sequence spans 1038 residues: MPVRIYALAKELNLDSKELVDVVKKAGITGKGSALASLSDEEAQQVRGHLAGSAAKSEPKPKAAPPTKDTPTAPVAPVRDLSGATGRKPSAINVGRPSKPAEAADNPNAPAQPIRDGGRPVGKPAPIVRTPKLAPAPEAKAPEAPAADGSPKPEIRLPKTGGVGTGMASPSGRGIGMGAKTDGQSTKPESAASAPSVPGPKSDSGGRKAPESPKRESAPVASSDDDGSSNKGGGLASRIAGRMGNNSSGRVVPNTPGTPLSAVRRDSASAGGKMRSLDRSRNRPEEAAKAGDAGKSKKREPRIKVNLAQLPSAPAKPAAPTGSSGPAAQKPDIKLTRDVIEGHKQGMKAPLARLEQDEADKKQRSKKTAEGTVGLAGRGKRVIDEDEKPKKKGLAGMASARAERQRGGGGRRIVGSDGGDRHHYRRSRPRIRRKGVNTAAPRKEKVQIELPCTVRNFCEGSGLSVADVMRTLMGMGMMVNINADIDFETAELLATEHDLDIELKAAESLEQELITEIEETADDPDTLVARPPVVTFLGHVDHGKTSLLDHLVGINVVKGEAGGITQHIRAYKIDKDGRAVTFVDTPGHEAFTEMRARGANVTDIAVLVVAADDGIMPQTEEAISHAKAAEVPIVVALNKIDLEGVDANRVMTQLTEHQLTPSEWGGDVEIVRTSATQGTGMDELLDTLLTIAELNEYSANPNRSALGVCLESEQQGDRGVVAKLIVQNGTLRVGDILVCGPAHGRVRAMQDTLTGKPITEAGPSTPVSLMGLDTPPGAGDRFHVLKDISQAREIASAREGESSRQSLSGITTKVSFDSFQEMLEDGKLGESADTVKLNLIIRADARGSLEAIDKELSKFDHPEVEIRVLQRSVGGISLADATLASASDAVILGFNVIPDDKARSLAEERGVEIRRYDVIYKLTDDIRALIEGRLKPEERVVELGRALVKQVFSISRVGTIAGCYVAQGSIQRNCRIRVNRDGRTIGDYQLDTLRRIKEDVKEVPRGMECGIRLQGFNDIKQDDVLEAYKIEEVARKLD.

The disordered stretch occupies residues 32–442 (GSALASLSDE…RKGVNTAAPR (411 aa)). Composition is skewed to low complexity over residues 65-77 (PPTKDTPTAPVAP), 100-113 (PAEAADNPNAPAQP), and 131-147 (PKLAPAPEAKAPEAPAA). 2 stretches are compositionally biased toward basic and acidic residues: residues 204 to 217 (SGGRKAPESPKRES) and 275 to 295 (RSLDRSRNRPEEAAKAGDAGK). Over residues 311–328 (PSAPAKPAAPTGSSGPAA) the composition is skewed to low complexity. Basic and acidic residues predominate over residues 331–344 (PDIKLTRDVIEGHK). Positions 422-435 (HHYRRSRPRIRRKG) are enriched in basic residues. The 168-residue stretch at 529-696 (ARPPVVTFLG…TLLTIAELNE (168 aa)) folds into the tr-type G domain. The interval 538–545 (GHVDHGKT) is G1. GTP is bound at residue 538–545 (GHVDHGKT). Positions 563–567 (GITQH) are G2. A G3 region spans residues 584–587 (DTPG). GTP is bound by residues 584–588 (DTPGH) and 638–641 (NKID). The tract at residues 638-641 (NKID) is G4. Positions 674 to 676 (SAT) are G5.

It belongs to the TRAFAC class translation factor GTPase superfamily. Classic translation factor GTPase family. IF-2 subfamily.

It is found in the cytoplasm. Its function is as follows. One of the essential components for the initiation of protein synthesis. Protects formylmethionyl-tRNA from spontaneous hydrolysis and promotes its binding to the 30S ribosomal subunits. Also involved in the hydrolysis of GTP during the formation of the 70S ribosomal complex. The chain is Translation initiation factor IF-2 from Rhodopirellula baltica (strain DSM 10527 / NCIMB 13988 / SH1).